Reading from the N-terminus, the 118-residue chain is Evasin P1080 (118 aa).

An N-terminal signal peptide occupies residues 1–19; it reads FFQLAVFVVILFNINLLSA. 3 cysteine pairs are disulfide-bonded: Cys41–Cys60, Cys45–Cys62, and Cys56–Cys73. N-linked (GlcNAc...) asparagine glycosylation occurs at Asn44. N-linked (GlcNAc...) asparagine glycans are attached at residues Asn67 and Asn104.

It localises to the secreted. In terms of biological role, salivary chemokine-binding protein which binds to host chemokines CXCL1, CXCL2, CXCL3, CXCL4, CXCL5, CXCL6, CXCL10, CXCL11 and CXCL13. The chain is Evasin P1080 from Ixodes ricinus (Common tick).